A 307-amino-acid chain; its full sequence is Small ribosomal subunit protein uS2 (307 aa).

Positions 256-307 (GGEAEQAAVDATGGAATEETPAAESTGAASEAAAVSEAAEPATEQPAADAEA) are disordered. Low complexity predominate over residues 259–307 (AEQAAVDATGGAATEETPAAESTGAASEAAAVSEAAEPATEQPAADAEA).

It belongs to the universal ribosomal protein uS2 family.

This chain is Small ribosomal subunit protein uS2, found in Nocardioides sp. (strain ATCC BAA-499 / JS614).